A 353-amino-acid polypeptide reads, in one-letter code: Nicotinate-nucleotide--dimethylbenzimidazole phosphoribosyltransferase (353 aa).

The Proton acceptor role is filled by E318.

Belongs to the CobT family.

It carries out the reaction 5,6-dimethylbenzimidazole + nicotinate beta-D-ribonucleotide = alpha-ribazole 5'-phosphate + nicotinate + H(+). It functions in the pathway nucleoside biosynthesis; alpha-ribazole biosynthesis; alpha-ribazole from 5,6-dimethylbenzimidazole: step 1/2. In terms of biological role, catalyzes the synthesis of alpha-ribazole-5'-phosphate from nicotinate mononucleotide (NAMN) and 5,6-dimethylbenzimidazole (DMB). This chain is Nicotinate-nucleotide--dimethylbenzimidazole phosphoribosyltransferase, found in Roseiflexus castenholzii (strain DSM 13941 / HLO8).